The following is a 946-amino-acid chain: Alanine--tRNA ligase, cytoplasmic (946 aa).

Zn(2+)-binding residues include H591, H595, C710, and H714.

The protein belongs to the class-II aminoacyl-tRNA synthetase family. As to quaternary structure, monomer. Zn(2+) serves as cofactor.

It is found in the cytoplasm. It carries out the reaction tRNA(Ala) + L-alanine + ATP = L-alanyl-tRNA(Ala) + AMP + diphosphate. Catalyzes the attachment of alanine to tRNA(Ala) in a two-step reaction: alanine is first activated by ATP to form Ala-AMP and then transferred to the acceptor end of tRNA(Ala). Also edits incorrectly charged tRNA(Ala) via its editing domain. In Dictyostelium discoideum (Social amoeba), this protein is Alanine--tRNA ligase, cytoplasmic (alaS).